Here is an 817-residue protein sequence, read N- to C-terminus: Dual specificity tyrosine-phosphorylation-regulated kinase mbk-2 (817 aa).

Disordered regions lie at residues 1 to 46 (MAAL…HECP), 70 to 148 (PTSF…GPLG), 186 to 206 (GSYE…GSQQ), and 301 to 396 (LPNV…FRPE). Positions 7–25 (FTRNSRSYGQQPIDVTQQG) are enriched in polar residues. Composition is skewed to low complexity over residues 70 to 81 (PTSFSGASSSSS) and 97 to 111 (NLLG…SNSL). Composition is skewed to polar residues over residues 122–143 (SGNT…TNNL) and 193–206 (GQAQ…GSQQ). A compositionally biased stretch (low complexity) spans 303–318 (NVGTSSSNGSSNSSSG). Polar residues predominate over residues 327-351 (LMTQSIGGPNKHLSASHSTLNTAST). A Phosphoserine; by cdk-1 modification is found at Ser-362. The segment covering 364–392 (SNESLSRSHTSSSGGSQGGHNSNSGSNSG) has biased composition (low complexity). The Protein kinase domain occupies 461–774 (YEVLKVIGKG…PAQALKHKWL (314 aa)). ATP-binding positions include 467–475 (IGKGSFGQV) and Lys-490. Residue Asp-587 is the Proton acceptor of the active site. Tyr-621 is subject to Phosphotyrosine; by autocatalysis.

The protein belongs to the protein kinase superfamily. CMGC Ser/Thr protein kinase family. MNB/DYRK subfamily. As to quaternary structure, part of a complex, consisting of pseudophosphatases egg-3, egg-4, egg-5 and kinase mbk-2; this complex is required for the oocyte-to-zygote transition. Interacts (via Tyr-619 and Tyr-621) with egg-4 (via tyrosine-protein phosphatase domain) and egg-5 (via tyrosine-protein phosphatase domain); mbk-2 tyrosine phosphorylation enhances the interaction. The interaction inhibits mbk-2 kinase activity and is required for mbk-2 oocyte cortex localization. Interacts (via N-terminus) with egg-3 (via tyrosine-protein phosphatase domain); the interaction does not affect mbk-2 kinase activity, is enhanced by mbk-2 tyrosine phosphorylation status and requires prior binding of mbk-2 to egg-4 and egg-5. The cofactor is Mg(2+). Autophosphorylated. As to expression, in L1 larvae, expressed widely in the nervous system, including head neurons and the ventral nerve cord. In adult animals, continues to be expressed in the nervous system and is also expressed in body wall muscle.

The protein resides in the cytoplasm. It is found in the cell cortex. It catalyses the reaction L-seryl-[protein] + ATP = O-phospho-L-seryl-[protein] + ADP + H(+). The catalysed reaction is L-threonyl-[protein] + ATP = O-phospho-L-threonyl-[protein] + ADP + H(+). The enzyme catalyses L-tyrosyl-[protein] + ATP = O-phospho-L-tyrosyl-[protein] + ADP + H(+). Its activity is regulated as follows. Activated during oocyte maturation by phosphorylation on Ser-362 by cdk-1. The pseudotyrosine phosphatases egg-4 and egg-5 sequester activated mbk-2 until the meiotic divisions and inhibit mbk-2 kinase activity directly, using a mixed-inhibition mechanism that does not involve tyrosine dephosphorylation. Required for oocyte-to-zygote transition in which it phosphorylates oocyte proteins, including mei-1, oma-1, oma-2, mex-5, and mex-6, modifying their activity and/or stability following meiosis. Through phosphorylation of P granule components including meg-1, promotes the disassembly of zygotic P granules in the anterior cytoplasm during zygote polarization, and thus plays a role in P granule distribution and segregation in early stage embryos following meiosis. Functions in both spindle positioning and in the posterior localization of cytoplasmic determinants, including pie-1, pos-1, and pgl-1, in early embryos. Involved in the asymmetric distribution of plk-1 at the 2-cell embryonic stage. The polypeptide is Dual specificity tyrosine-phosphorylation-regulated kinase mbk-2 (Caenorhabditis elegans).